A 167-amino-acid chain; its full sequence is ATP synthase subunit b (167 aa).

Residues 8-28 traverse the membrane as a helical segment; sequence AEAEFWVGAGLLIFLGIVFFG.

This sequence belongs to the ATPase B chain family. As to quaternary structure, F-type ATPases have 2 components, F(1) - the catalytic core - and F(0) - the membrane proton channel. F(1) has five subunits: alpha(3), beta(3), gamma(1), delta(1), epsilon(1). F(0) has three main subunits: a(1), b(2) and c(10-14). The alpha and beta chains form an alternating ring which encloses part of the gamma chain. F(1) is attached to F(0) by a central stalk formed by the gamma and epsilon chains, while a peripheral stalk is formed by the delta and b chains.

The protein resides in the cell inner membrane. Functionally, f(1)F(0) ATP synthase produces ATP from ADP in the presence of a proton or sodium gradient. F-type ATPases consist of two structural domains, F(1) containing the extramembraneous catalytic core and F(0) containing the membrane proton channel, linked together by a central stalk and a peripheral stalk. During catalysis, ATP synthesis in the catalytic domain of F(1) is coupled via a rotary mechanism of the central stalk subunits to proton translocation. In terms of biological role, component of the F(0) channel, it forms part of the peripheral stalk, linking F(1) to F(0). The polypeptide is ATP synthase subunit b (Phenylobacterium zucineum (strain HLK1)).